The following is a 1713-amino-acid chain: Cell wall protein AWA1 (1713 aa).

Positions 1-23 (MFNRFNKLQAALALVLYSQSALG) are cleaved as a signal peptide. N-linked (GlcNAc...) asparagine glycosylation is present at Asn34. Disordered stretches follow at residues 80-117 (IAPSTSSSEVSSSITSSGSSVSGSSSITSSGSSVSSSS), 256-327 (TSTT…AESI), and 359-939 (SSGI…STAS). Low complexity predominate over residues 256–275 (TSTTSDTYISSSSPSQVTSS). Composition is skewed to polar residues over residues 276-327 (AEPT…AESI) and 359-368 (SSGISSSVEP). Over residues 374-939 (PSSDESISST…QSTSSASTAS (566 aa)) the composition is skewed to low complexity. Residues Asn1133, Asn1241, and Asn1278 are each glycosylated (N-linked (GlcNAc...) asparagine). The tract at residues 1582–1603 (KTVTSEAPKETSETSETSAAPK) is disordered. Ala1692 carries GPI-anchor amidated alanine lipidation. Positions 1693–1713 (AGLNANTLNALVGIFVLAFFN) are cleaved as a propeptide — removed in mature form.

The protein belongs to the SRP1/TIP1 family. Post-translationally, the GPI-anchor is attached to the protein in the endoplasmic reticulum and serves to target the protein to the cell surface. There, the glucosamine-inositol phospholipid moiety is cleaved off and the GPI-modified mannoprotein is covalently attached via its lipidless GPI glycan remnant to the 1,6-beta-glucan of the outer cell wall layer.

The protein localises to the secreted. Its subcellular location is the cell wall. The protein resides in the membrane. Involved in cell wall organization and biosynthesis. Confers cell surface hydrophobicity (CSH). This chain is Cell wall protein AWA1 (AWA1), found in Saccharomyces cerevisiae (strain Kyokai no. 7 / NBRC 101557) (Baker's yeast).